A 205-amino-acid polypeptide reads, in one-letter code: Protein N-terminal glutamine amidohydrolase (205 aa).

Catalysis depends on residues Cys-20, His-74, and Asp-90.

It belongs to the NTAQ1 family. Monomer.

The enzyme catalyses N-terminal L-glutaminyl-[protein] + H2O = N-terminal L-glutamyl-[protein] + NH4(+). Its function is as follows. Mediates the side-chain deamidation of N-terminal glutamine residues to glutamate, an important step in N-end rule pathway of protein degradation. Conversion of the resulting N-terminal glutamine to glutamate renders the protein susceptible to arginylation, polyubiquitination and degradation as specified by the N-end rule. Does not act on substrates with internal or C-terminal glutamine and does not act on non-glutamine residues in any position. The polypeptide is Protein N-terminal glutamine amidohydrolase (tun) (Drosophila melanogaster (Fruit fly)).